We begin with the raw amino-acid sequence, 91 residues long: Sm-like protein LSM6A (91 aa).

A Sm domain is found at 14-86 (TPADFLKSIR…VLYISTVNMT (73 aa)).

The protein belongs to the snRNP Sm proteins family. Component of the heptameric LSM1-LSM7 complex that forms a seven-membered ring structure with a donut shape. The LSM subunits are arranged in the order LSM1, LSM2, LSM3, LSM6, LSM5, LSM7 and LSM4. Component of the heptameric LSM2-LSM8 complex that forms a seven-membered ring structure with a donut shape. The LSM subunits are arranged in the order LSM8, LSM2, LSM3, LSM6, LSM5, LSM7 and LSM4. LSM6A subunit interacts only with its two neighboring subunits, LSM3A or LSM3B and LSM5. In terms of tissue distribution, expressed in roots, leaves, stems, flowers and siliques.

The protein localises to the cytoplasm. It localises to the nucleus. Its function is as follows. Component of LSM protein complexes, which are involved in RNA processing. Component of the cytoplasmic LSM1-LSM7 complex which is involved in mRNA degradation by promoting decapping and leading to accurate 5'-3' mRNA decay. The cytoplasmic LSM1-LSM7 complex regulates developmental gene expression by the decapping of specific development-related transcripts. Component of the nuclear LSM2-LSM8 complex which is involved splicing nuclear mRNAs. LSM2-LSM8 binds directly to the U6 small nuclear RNAs (snRNAs) and is essential for accurate splicing of selected development-related mRNAs through the stabilization of the spliceosomal U6 snRNA. Plays a critical role in the regulation of development-related gene expression. The chain is Sm-like protein LSM6A from Arabidopsis thaliana (Mouse-ear cress).